The chain runs to 122 residues: Small ribosomal subunit protein uS13 (122 aa).

The tract at residues 93–122 is disordered; the sequence is RLSLPVRGQRTKTNSRTRKGKRKTVAGKKK. A compositionally biased stretch (basic residues) spans 101–122; the sequence is QRTKTNSRTRKGKRKTVAGKKK.

This sequence belongs to the universal ribosomal protein uS13 family. Part of the 30S ribosomal subunit. Forms a loose heterodimer with protein S19. Forms two bridges to the 50S subunit in the 70S ribosome.

Its function is as follows. Located at the top of the head of the 30S subunit, it contacts several helices of the 16S rRNA. In the 70S ribosome it contacts the 23S rRNA (bridge B1a) and protein L5 of the 50S subunit (bridge B1b), connecting the 2 subunits; these bridges are implicated in subunit movement. Contacts the tRNAs in the A and P-sites. This is Small ribosomal subunit protein uS13 from Chlamydia caviae (strain ATCC VR-813 / DSM 19441 / 03DC25 / GPIC) (Chlamydophila caviae).